A 512-amino-acid chain; its full sequence is Glycerol-3-phosphate dehydrogenase (512 aa).

FAD is bound at residue 16 to 44 (DVAVVGGGINGVGIAADAAGRGLSVFLCE).

It belongs to the FAD-dependent glycerol-3-phosphate dehydrogenase family. FAD serves as cofactor.

It is found in the cytoplasm. The catalysed reaction is a quinone + sn-glycerol 3-phosphate = dihydroxyacetone phosphate + a quinol. The sequence is that of Glycerol-3-phosphate dehydrogenase (glpD) from Pseudomonas aeruginosa (strain ATCC 15692 / DSM 22644 / CIP 104116 / JCM 14847 / LMG 12228 / 1C / PRS 101 / PAO1).